Reading from the N-terminus, the 519-residue chain is Protein twist (519 aa).

4 disordered regions span residues 53 to 77 (MQQQ…QQQY), 131 to 156 (NFEQ…VATA), 301 to 321 (YEAY…SDRD), and 368 to 389 (FRKP…DEFS). 2 stretches are compositionally biased toward low complexity: residues 54–76 (QQQQ…QQQQ) and 134–146 (QQQQ…QQQQ). Positions 308-317 (NSLNGSTYSS) are enriched in polar residues. Residues 368–379 (FRKPRRRLKRKP) show a composition bias toward basic residues. One can recognise a bHLH domain in the interval 390–441 (NQRVMANVRERQRTQSLNDAFKALQQIIPTLPSDKLSKIQTLKLATRYIDFL).

As to quaternary structure, efficient DNA binding requires dimerization with another bHLH protein. Homodimer.

It localises to the nucleus. Functionally, involved in the establishment and dorsoventral patterning of germ layers in the embryo. The chain is Protein twist from Drosophila virilis (Fruit fly).